The chain runs to 60 residues: Protein YmjC (60 aa).

The tract at residues 40 to 60 (HKPYPTNKMQTTSGKKVIQDR) is disordered.

The polypeptide is Protein YmjC (ymjC) (Escherichia coli (strain K12)).